The primary structure comprises 430 residues: Glutamyl-tRNA reductase (430 aa).

Substrate contacts are provided by residues 49-52 (TCNR), serine 109, 114-116 (EGQ), and glutamine 120. Cysteine 50 functions as the Nucleophile in the catalytic mechanism. Residue 189 to 194 (GAGKMA) participates in NADP(+) binding.

This sequence belongs to the glutamyl-tRNA reductase family. Homodimer.

It carries out the reaction (S)-4-amino-5-oxopentanoate + tRNA(Glu) + NADP(+) = L-glutamyl-tRNA(Glu) + NADPH + H(+). The protein operates within porphyrin-containing compound metabolism; protoporphyrin-IX biosynthesis; 5-aminolevulinate from L-glutamyl-tRNA(Glu): step 1/2. Its pathway is porphyrin-containing compound metabolism; chlorophyll biosynthesis. Its function is as follows. Catalyzes the NADPH-dependent reduction of glutamyl-tRNA(Glu) to glutamate 1-semialdehyde (GSA). This is Glutamyl-tRNA reductase from Crocosphaera subtropica (strain ATCC 51142 / BH68) (Cyanothece sp. (strain ATCC 51142)).